A 360-amino-acid chain; its full sequence is Protein Wnt-2 (360 aa).

The N-terminal stretch at 1–25 is a signal peptide; sequence MNAPLGGIWLWLPLLLTWLSPEVSS. Disulfide bonds link C76–C87, C127–C135, C137–C157, C206–C220, C208–C215, C278–C309, C294–C304, C308–C348, C324–C339, C326–C336, and C331–C332. S212 carries O-palmitoleoyl serine; by PORCN lipidation. N-linked (GlcNAc...) asparagine glycosylation is present at N295.

The protein belongs to the Wnt family. Palmitoleoylation is required for efficient binding to frizzled receptors. Depalmitoleoylation leads to Wnt signaling pathway inhibition.

Its subcellular location is the secreted. It localises to the extracellular space. It is found in the extracellular matrix. Its function is as follows. Ligand for members of the frizzled family of seven transmembrane receptors. Probable developmental protein. May be a signaling molecule which affects the development of discrete regions of tissues. Is likely to signal over only few cell diameters. The polypeptide is Protein Wnt-2 (WNT2) (Carollia perspicillata (Seba's short-tailed bat)).